The chain runs to 491 residues: Immediate early protein IE1 (491 aa).

The segment covering 1-11 (MESSAKRKMDP) has biased composition (basic and acidic residues). A nuclear localization signal region spans residues 1-24 (MESSAKRKMDPDNPDEGPSSKVPR). Positions 1 to 30 (MESSAKRKMDPDNPDEGPSSKVPRPETPVT) are disordered. Residues 132–346 (ILDKVHEPFE…SVMKRRIEEI (215 aa)) form an interaction with host PML, interference with PML sumoylation and disruption of PML-associated nuclear bodies region. The interaction with host STAT2 stretch occupies residues 373–445 (AIAEESDEEE…EEGAQEERED (73 aa)). The segment at 410 to 420 (ATIPLSSVIVA) is modulation of STAT3/STAT1 signaling. Residues 410 to 445 (ATIPLSSVIVAENSDQEESEQSDEEEEEGAQEERED) form an interaction with host STAT3 region. Residues 421–472 (ENSDQEESEQSDEEEEEGAQEEREDTVSVKSEPVSEIEEVAPEEEEDGAEEP) form an acidic region. Residues 421–491 (ENSDQEESEQ…PMVTRSKADQ (71 aa)) form a disordered region. The segment covering 423–444 (SDQEESEQSDEEEEEGAQEERE) has biased composition (acidic residues). The interval 449–452 (VKSE) is interaction with host SUMO1. K450 is covalently cross-linked (Glycyl lysine isopeptide (Lys-Gly) (interchain with G-Cter in SUMO)). The segment covering 455–470 (SEIEEVAPEEEEDGAE) has biased composition (acidic residues). A chromosome-tethering domain (CTD), binding to histones region spans residues 475–491 (SGGKSTHPMVTRSKADQ).

This sequence belongs to the HHV-5 IE1 protein family. Forms homodimers. Interacts with human p53/TP53; this interaction inhibits p53/TP53-dependent transactivation activity. Interacts with host STAT1. Interacts with host STAT2; this interaction promotes viral growth and counteracts the antiviral interferon response. May also interact with the host STAT1-STAT2 heterodimer. Interacts with host STAT3; this interaction leads to STAT3 nuclear accumulation and disruption of IL6-induced STAT3 phosphorylation. Interacts with host PML; this interaction inhibits host PML de novo sumoylation and probably inhibits PML regulation of type I and type II interferon-induced gene expression. Interacts with host DAXX. Interacts with host SP100. Interacts with host E2F1. Interacts with host RB1. Interacts with host HDAC1; this interaction inhibits histone deacetylation and promotes viral transcription. Interacts with host HDAC2; this interaction inhibits histone deacetylation and promotes viral transcription. Interacts with host HDAC3; this interaction inhibits histone deacetylation and promotes viral transcription. Interacts with host PLSCR1; this interaction inhibits IE1 transactivating activity. Post-translationally, sumoylated by host PML. Sumoylation abolishes the interaction with host STAT2 and thus the IE1-mediated repression of interferon-stimulated genes.

The protein resides in the host nucleus. In terms of biological role, plays an important role in transactivating viral early genes as well as activating its own promoter, probably by altering the viral chromatin structure. Expression of IE1 and IE2 proteins is critical for the establishment of lytic infection and reactivation from viral latency. Disrupts PML-associated ND10 nuclear bodies by interfering with host PML and SP100 sumoylation thereby altering the regulation of type I and type II interferon-induced gene expression. Promotes efficient viral growth by interacting with and directing host SP100 to degradation, leading to enhanced acetylation level of histones. In addition, functions in counteracting the host innate antiviral response. Inhibits the type I interferon pathway by directly interacting with and sequestrating host STAT2. Also targets type II interferon pathway by repressing IL6- and STAT3 target genes. Repression of STAT3 genes is due to STAT3 nuclear accumulation and disruption of IL6-induced STAT3 phosphorylation by IE1. This repression is followed by phosphorylation and activation of STAT1. Inhibits host ISG transcription by sequestering host ISGF3 in a PML- and STAT2- binding dependent manner. Alters host cell cycle progression, probably through its interaction with host E2F1 or RB1 that overcomes the RB1-mediated repression of E2F-responsive promoters. This chain is Immediate early protein IE1 (UL123), found in Human cytomegalovirus (strain AD169) (HHV-5).